A 126-amino-acid polypeptide reads, in one-letter code: Holo-[acyl-carrier-protein] synthase (126 aa).

Mg(2+) is bound by residues aspartate 9 and glutamate 58.

It belongs to the P-Pant transferase superfamily. AcpS family. Mg(2+) serves as cofactor.

The protein localises to the cytoplasm. It catalyses the reaction apo-[ACP] + CoA = holo-[ACP] + adenosine 3',5'-bisphosphate + H(+). Transfers the 4'-phosphopantetheine moiety from coenzyme A to a Ser of acyl-carrier-protein. In Salmonella newport (strain SL254), this protein is Holo-[acyl-carrier-protein] synthase.